Here is a 723-residue protein sequence, read N- to C-terminus: Fatty acid oxidation complex subunit alpha (723 aa).

The segment at 1-189 (MIYQANTLQV…KVGLLDAIVE (189 aa)) is enoyl-CoA hydratase/isomerase. D296 contacts substrate. Residues 311 to 723 (NKATERAAVL…FYDGQQASSL (413 aa)) form a 3-hydroxyacyl-CoA dehydrogenase region. Residues M325, D344, 401 to 403 (VVE), K408, and S430 contribute to the NAD(+) site. Residue H451 is the For 3-hydroxyacyl-CoA dehydrogenase activity of the active site. N454 lines the NAD(+) pocket. Positions 501 and 661 each coordinate substrate.

It in the N-terminal section; belongs to the enoyl-CoA hydratase/isomerase family. This sequence in the C-terminal section; belongs to the 3-hydroxyacyl-CoA dehydrogenase family. As to quaternary structure, heterotetramer of two alpha chains (FadB) and two beta chains (FadA).

The enzyme catalyses a (3S)-3-hydroxyacyl-CoA + NAD(+) = a 3-oxoacyl-CoA + NADH + H(+). It carries out the reaction a (3S)-3-hydroxyacyl-CoA = a (2E)-enoyl-CoA + H2O. The catalysed reaction is a 4-saturated-(3S)-3-hydroxyacyl-CoA = a (3E)-enoyl-CoA + H2O. It catalyses the reaction (3S)-3-hydroxybutanoyl-CoA = (3R)-3-hydroxybutanoyl-CoA. The enzyme catalyses a (3Z)-enoyl-CoA = a 4-saturated (2E)-enoyl-CoA. It carries out the reaction a (3E)-enoyl-CoA = a 4-saturated (2E)-enoyl-CoA. Its pathway is lipid metabolism; fatty acid beta-oxidation. Functionally, involved in the aerobic and anaerobic degradation of long-chain fatty acids via beta-oxidation cycle. Catalyzes the formation of 3-oxoacyl-CoA from enoyl-CoA via L-3-hydroxyacyl-CoA. It can also use D-3-hydroxyacyl-CoA and cis-3-enoyl-CoA as substrate. This Vibrio atlanticus (strain LGP32) (Vibrio splendidus (strain Mel32)) protein is Fatty acid oxidation complex subunit alpha.